The following is a 108-amino-acid chain: Peptidyl-prolyl cis-trans isomerase FKBP1A (108 aa).

One can recognise a PPIase FKBP-type domain in the interval 20 to 108; that stretch reads GQTCVVHYTG…VFDVELLKLE (89 aa). Lys-53 is modified (N6-acetyllysine; alternate). An N6-succinyllysine; alternate modification is found at Lys-53.

The protein belongs to the FKBP-type PPIase family. FKBP1 subfamily. Interacts with TGFBR1; prevents TGFBR1 phosphorylation by TGFBR2 and stabilizes it in the inactive conformation. Interacts with ACVR1B and SMAD7. Identified in a complex composed of RYR1, PDE4D, PKA, FKBP1A and protein phosphatase 1 (PP1). Interacts directly with RYR2 and RYR3. Interacts with GLMN; rapamycin and FK506 abolish the interaction with GLMN in a dose dependent manner. Interacts directly with RYR1.

It localises to the cytoplasm. Its subcellular location is the cytosol. The protein localises to the sarcoplasmic reticulum membrane. It carries out the reaction [protein]-peptidylproline (omega=180) = [protein]-peptidylproline (omega=0). Its activity is regulated as follows. Inhibited by both FK506 and rapamycin. Its function is as follows. Keeps in an inactive conformation TGFBR1, the TGF-beta type I serine/threonine kinase receptor, preventing TGF-beta receptor activation in absence of ligand. Recruits SMAD7 to ACVR1B which prevents the association of SMAD2 and SMAD3 with the activin receptor complex, thereby blocking the activin signal. May modulate the RYR1 calcium channel activity. PPIases accelerate the folding of proteins. It catalyzes the cis-trans isomerization of proline imidic peptide bonds in oligopeptides. The protein is Peptidyl-prolyl cis-trans isomerase FKBP1A (FKBP1A) of Homo sapiens (Human).